The primary structure comprises 195 residues: 3-isopropylmalate dehydratase small subunit (195 aa).

This sequence belongs to the LeuD family. LeuD type 1 subfamily. As to quaternary structure, heterodimer of LeuC and LeuD.

It carries out the reaction (2R,3S)-3-isopropylmalate = (2S)-2-isopropylmalate. The protein operates within amino-acid biosynthesis; L-leucine biosynthesis; L-leucine from 3-methyl-2-oxobutanoate: step 2/4. Its function is as follows. Catalyzes the isomerization between 2-isopropylmalate and 3-isopropylmalate, via the formation of 2-isopropylmaleate. The sequence is that of 3-isopropylmalate dehydratase small subunit from Koribacter versatilis (strain Ellin345).